A 183-amino-acid chain; its full sequence is Adenine phosphoribosyltransferase (183 aa).

The protein belongs to the purine/pyrimidine phosphoribosyltransferase family. In terms of assembly, homodimer.

Its subcellular location is the cytoplasm. The catalysed reaction is AMP + diphosphate = 5-phospho-alpha-D-ribose 1-diphosphate + adenine. Its pathway is purine metabolism; AMP biosynthesis via salvage pathway; AMP from adenine: step 1/1. In terms of biological role, catalyzes a salvage reaction resulting in the formation of AMP, that is energically less costly than de novo synthesis. This chain is Adenine phosphoribosyltransferase, found in Salmonella gallinarum (strain 287/91 / NCTC 13346).